A 249-amino-acid polypeptide reads, in one-letter code: General transcription factor IIF subunit 2 (249 aa).

Residue Ala-2 is modified to N-acetylalanine. N6-acetyllysine occurs at positions 22, 33, and 137. Ser-142 carries the post-translational modification Phosphoserine. DNA is bound by residues Gly-227 and His-229. Ser-248 is subject to Phosphoserine.

The protein belongs to the TFIIF beta subunit family. As to quaternary structure, heterodimer of an alpha and a beta subunit. Interacts with HTATSF1 and GPBP1. Interacts with URI1. Interacts with GTF2B (via N-terminus); this interaction is inhibited in presence of GTF2F1. Part of TBP-based Pol II pre-initiation complex (PIC), in which Pol II core assembles with general transcription factors and other specific initiation factors including GTF2E1, GTF2E2, GTF2F1, GTF2F2, TCEA1, ERCC2, ERCC3, GTF2H2, GTF2H3, GTF2H4, GTF2H5, GTF2A1, GTF2A2, GTF2B and TBP; this large multi-subunit PIC complex mediates DNA unwinding and targets Pol II core to the transcription start site where the first phosphodiester bond forms.

It is found in the nucleus. In terms of biological role, TFIIF is a general transcription initiation factor that binds to RNA polymerase II and helps to recruit it to the initiation complex in collaboration with TFIIB. This is General transcription factor IIF subunit 2 (GTF2F2) from Homo sapiens (Human).